The chain runs to 781 residues: Cadherin-24 (781 aa).

An N-terminal signal peptide occupies residues 1 to 22; sequence MWGLVRLLLAWLGGWGCMGRLA. Positions 23 to 44 are excised as a propeptide; it reads APVPAWAGSRGHSGPTLLRTRR. Residues 45-603 are Extracellular-facing; the sequence is SWVWNQFFVI…LSPTGLSTGA (559 aa). Cadherin domains lie at 46–150, 151–259, 260–374, 375–479, and 479–592; these read WVWN…PPVF, PLGP…PPKF, PQSL…PPAF, TQAT…APQL, and LAEP…WPEA. 3 N-linked (GlcNAc...) asparagine glycosylation sites follow: Asn446, Asn510, and Asn525. Residues 604-624 traverse the membrane as a helical segment; it reads LLAIVTCMGTLLALVVLFVAL. At 625–781 the chain is on the cytoplasmic side; sequence RRQKQEALMV…LYGAKEPPAP (157 aa). 2 disordered regions span residues 665–700 and 731–762; these read LQNP…PGPA and EGRG…LDDW. The segment covering 733–746 has biased composition (low complexity); sequence RGSSCGSLSSLGSG.

In terms of assembly, associates with alpha-, beta- and delta-catenins.

The protein resides in the cell membrane. Functionally, cadherins are calcium-dependent cell adhesion proteins. They preferentially interact with themselves in a homophilic manner in connecting cells; cadherins may thus contribute to the sorting of heterogeneous cell types. Cadherin-24 mediate strong cell-cell adhesion. The protein is Cadherin-24 (Cdh24) of Mus musculus (Mouse).